A 25-amino-acid chain; its full sequence is Unknown protein 7 (25 aa).

The interval 1 to 25 (MENGKVHVASMSGLSMPHMNEMLEK) is disordered.

The polypeptide is Unknown protein 7 (Pseudotsuga menziesii (Douglas-fir)).